Reading from the N-terminus, the 468-residue chain is Aldehyde dehydrogenase family 3 member B1 (468 aa).

Met1 is subject to N-acetylmethionine. Residue 188-193 (GNAYVG) participates in NAD(+) binding. Active-site residues include Glu210 and Cys244. 2 S-palmitoyl cysteine lipidation sites follow: Cys462 and Cys463. Cys465 is modified (cysteine methyl ester). Cys465 carries S-geranylgeranyl cysteine lipidation. A propeptide spans 466 to 468 (TLL) (removed in mature form).

The protein belongs to the aldehyde dehydrogenase family. Post-translationally, dually lipidated in the C-terminus; prenylation occurs prior to, and is a prerequisite for palmitoylation. It is also required for activity towards long-chain substrates. As to expression, highly expressed in kidney and liver. In brain is expressed at moderate levels in cortex, striatum and hippocampus, and at lower levels in brainstem and cerebellum.

The protein resides in the cell membrane. The catalysed reaction is an aldehyde + NAD(+) + H2O = a carboxylate + NADH + 2 H(+). It catalyses the reaction a long-chain fatty aldehyde + NAD(+) + H2O = a long-chain fatty acid + NADH + 2 H(+). It carries out the reaction a medium-chain fatty aldehyde + NAD(+) + H2O = a medium-chain fatty acid + NADH + 2 H(+). The enzyme catalyses octanal + NAD(+) + H2O = octanoate + NADH + 2 H(+). The catalysed reaction is nonanal + NAD(+) + H2O = nonanoate + NADH + 2 H(+). It catalyses the reaction hexadecanoate + NADH + 2 H(+) = hexadecanal + NAD(+) + H2O. It carries out the reaction (2E)-octenal + NAD(+) + H2O = (2E)-octenoate + NADH + 2 H(+). The enzyme catalyses (E)-non-2-enal + NAD(+) + H2O = (E)-non-2-enoate + NADH + 2 H(+). The catalysed reaction is (E)-4-hydroxynon-2-enal + NAD(+) + H2O = (E)-4-hydroxynon-2-enoate + NADH + 2 H(+). It catalyses the reaction (2E)-hexadecenal + NAD(+) + H2O = (E)-hexadec-2-enoate + NADH + 2 H(+). It carries out the reaction benzaldehyde + NAD(+) + H2O = benzoate + NADH + 2 H(+). The enzyme catalyses an aldehyde + NADP(+) + H2O = a carboxylate + NADPH + 2 H(+). The catalysed reaction is a medium-chain fatty aldehyde + NADP(+) + H2O = a medium-chain fatty acid + NADPH + 2 H(+). It catalyses the reaction hexanal + NADP(+) + H2O = hexanoate + NADPH + 2 H(+). It carries out the reaction octanal + NADP(+) + H2O = octanoate + NADPH + 2 H(+). The enzyme catalyses nonanal + NADP(+) + H2O = nonanoate + NADPH + 2 H(+). The catalysed reaction is (2E)-octenal + NADP(+) + H2O = (2E)-octenoate + NADPH + 2 H(+). It catalyses the reaction (E)-non-2-enal + NADP(+) + H2O = (E)-non-2-enoate + NADPH + 2 H(+). It carries out the reaction (E)-4-hydroxynon-2-enal + NADP(+) + H2O = (E)-4-hydroxynon-2-enoate + NADPH + 2 H(+). The enzyme catalyses benzaldehyde + NADP(+) + H2O = benzoate + NADPH + 2 H(+). It participates in alcohol metabolism; ethanol degradation; acetate from ethanol: step 2/2. In terms of biological role, oxidizes medium and long chain saturated and unsaturated fatty aldehydes generated in the plasma membrane into non-toxic fatty acids. May have a protective role against the cytotoxicity induced by lipid peroxidation. Short-chain fatty aldehydes are not good substrates. Can use both NADP(+) and NAD(+) as electron acceptor in vitro, however in vivo preference will depend on their tissue levels. Low activity towards acetaldehyde and 3,4-dihydroxyphenylacetaldehyde. Able to metabolize aromatic aldehydes such as benzaldehyde to their acid form. In Mus musculus (Mouse), this protein is Aldehyde dehydrogenase family 3 member B1 (Aldh3b1).